Reading from the N-terminus, the 495-residue chain is Bile acid-sensitive ion channel (495 aa).

Positions M1–S30 are binds the plasma membrane and stabilizes the channel in the closed state. Residues M1–R61 are Cytoplasmic-facing. The helical transmembrane segment at K62–S82 threads the bilayer. Residues R83–T459 lie on the Extracellular side of the membrane. 6 disulfide bridges follow: C112/C207, C185/C192, C298/C377, C315/C373, C328/C350, and C330/C342. N-linked (GlcNAc...) asparagine glycans are attached at residues N147 and N163. A glycan (N-linked (GlcNAc...) asparagine) is linked at N306. N-linked (GlcNAc...) asparagine glycans are attached at residues N370, N405, and N421. Residues G454 to S456 carry the GAS motif; ion selectivity filter motif. Residues I460 to L480 traverse the membrane as a helical segment. At K481–V495 the chain is on the cytoplasmic side.

It belongs to the amiloride-sensitive sodium channel (TC 1.A.6) family. ASIC5 subfamily. In terms of assembly, forms homotrimeric channels. As to expression, expressed by cholangiocytes (at protein level). Detected in brain, liver, duodenum, jejunum, ileum and testis.

The protein resides in the apical cell membrane. Its subcellular location is the cell membrane. The catalysed reaction is Na(+)(in) = Na(+)(out). It carries out the reaction Li(+)(in) = Li(+)(out). It catalyses the reaction K(+)(in) = K(+)(out). The enzyme catalyses H(+)(in) = H(+)(out). With respect to regulation, inhibited by the diuretic drug amiloride. Inhibited by diminazene. Inhibited by extracellular Ca(2+). Its function is as follows. Forms bile acid-gated sodium channels and may play a role in bile acid-dependent absorption and secretion by epithelial cells of the bile ducts. Displays high selectivity for sodium ions but can also permit the permeation of other cations. The gating could be indirect and the consequence of alterations of the membrane environment of the channel by bile acids. As a sodium channel of type II unipolar brush cells of the vestibulocerebellum, controlling the electrical activity of these cells, could play a role in motor coordination and balance. This is Bile acid-sensitive ion channel from Rattus norvegicus (Rat).